A 490-amino-acid chain; its full sequence is Cytochrome P450 2C19 (490 aa).

Cys435 contacts heme.

The protein belongs to the cytochrome P450 family. Requires heme as cofactor.

It localises to the endoplasmic reticulum membrane. The protein localises to the microsome membrane. The catalysed reaction is an organic molecule + reduced [NADPH--hemoprotein reductase] + O2 = an alcohol + oxidized [NADPH--hemoprotein reductase] + H2O + H(+). It catalyses the reaction (5Z,8Z,11Z)-eicosatrienoate + reduced [NADPH--hemoprotein reductase] + O2 = 19-hydroxy-(5Z,8Z,11Z)-eicosatrienoate + oxidized [NADPH--hemoprotein reductase] + H2O + H(+). It carries out the reaction (5Z,8Z,11Z,14Z)-eicosatetraenoate + reduced [NADPH--hemoprotein reductase] + O2 = 19-hydroxy-(5Z,8Z,11Z,14Z)-eicosatetraenoate + oxidized [NADPH--hemoprotein reductase] + H2O + H(+). The enzyme catalyses (5Z,8Z,11Z,14Z,17Z)-eicosapentaenoate + reduced [NADPH--hemoprotein reductase] + O2 = 19-hydroxy-(5Z,8Z,11Z,14Z,17Z)-eicosapentaenoate + oxidized [NADPH--hemoprotein reductase] + H2O + H(+). The catalysed reaction is (4Z,7Z,10Z,13Z,16Z,19Z)-docosahexaenoate + reduced [NADPH--hemoprotein reductase] + O2 = 21-hydroxy-(4Z,7Z,10Z,13Z,16Z,19Z)-docosahexaenoate + oxidized [NADPH--hemoprotein reductase] + H2O + H(+). It catalyses the reaction (5Z,8Z,11Z,14Z)-eicosatetraenoate + reduced [NADPH--hemoprotein reductase] + O2 = (8R,9S)-epoxy-(5Z,11Z,14Z)-eicosatrienoate + oxidized [NADPH--hemoprotein reductase] + H2O + H(+). It carries out the reaction (5Z,8Z,11Z,14Z)-eicosatetraenoate + reduced [NADPH--hemoprotein reductase] + O2 = (11R,12S)-epoxy-(5Z,8Z,14Z)-eicosatrienoate + oxidized [NADPH--hemoprotein reductase] + H2O + H(+). The enzyme catalyses (5Z,8Z,11Z,14Z)-eicosatetraenoate + reduced [NADPH--hemoprotein reductase] + O2 = (11S,12R)-epoxy-(5Z,8Z,14Z)-eicosatrienoate + oxidized [NADPH--hemoprotein reductase] + H2O + H(+). The catalysed reaction is (5Z,8Z,11Z,14Z)-eicosatetraenoate + reduced [NADPH--hemoprotein reductase] + O2 = (14R,15S)-epoxy-(5Z,8Z,11Z)-eicosatrienoate + oxidized [NADPH--hemoprotein reductase] + H2O + H(+). It catalyses the reaction (5Z,8Z,11Z,14Z,17Z)-eicosapentaenoate + reduced [NADPH--hemoprotein reductase] + O2 = (17R,18S)-epoxy-(5Z,8Z,11Z,14Z)-eicosatetraenoate + oxidized [NADPH--hemoprotein reductase] + H2O + H(+). It carries out the reaction (4Z,7Z,10Z,13Z,16Z,19Z)-docosahexaenoate + reduced [NADPH--hemoprotein reductase] + O2 = (19R,20S)-epoxy-(4Z,7Z,10Z,13Z,16Z)-docosapentaenoate + oxidized [NADPH--hemoprotein reductase] + H2O + H(+). The enzyme catalyses (4Z,7Z,10Z,13Z,16Z,19Z)-docosahexaenoate + reduced [NADPH--hemoprotein reductase] + O2 = (19S,20R)-epoxy-(4Z,7Z,10Z,13Z,16Z)-docosapentaenoate + oxidized [NADPH--hemoprotein reductase] + H2O + H(+). The catalysed reaction is (4R)-limonene + reduced [NADPH--hemoprotein reductase] + O2 = (1R,5S)-carveol + oxidized [NADPH--hemoprotein reductase] + H2O + H(+). It catalyses the reaction (4S)-limonene + reduced [NADPH--hemoprotein reductase] + O2 = (1S,5R)-carveol + oxidized [NADPH--hemoprotein reductase] + H2O + H(+). It carries out the reaction (4S)-limonene + reduced [NADPH--hemoprotein reductase] + O2 = (4S)-perillyl alcohol + oxidized [NADPH--hemoprotein reductase] + H2O + H(+). The enzyme catalyses fenbendazole + reduced [NADPH--hemoprotein reductase] + O2 = 4'-hydroxyfenbendazole + oxidized [NADPH--hemoprotein reductase] + H2O + H(+). It functions in the pathway lipid metabolism; fatty acid metabolism. Its pathway is terpene metabolism; (4R)-limonene degradation. Functionally, a cytochrome P450 monooxygenase involved in the metabolism of polyunsaturated fatty acids (PUFA). Mechanistically, uses molecular oxygen inserting one oxygen atom into a substrate, and reducing the second into a water molecule, with two electrons provided by NADPH via cytochrome P450 reductase (NADPH--hemoprotein reductase). Catalyzes the hydroxylation of carbon-hydrogen bonds. Hydroxylates PUFA specifically at the omega-1 position. Catalyzes the epoxidation of double bonds of PUFA. Also metabolizes plant monoterpenes such as limonene. Oxygenates (R)- and (S)-limonene to produce carveol and perillyl alcohol. Responsible for the metabolism of a number of therapeutic agents such as the anticonvulsant drug S-mephenytoin, omeprazole, proguanil, certain barbiturates, diazepam, propranolol, citalopram and imipramine. Hydroxylates fenbendazole at the 4' position. The polypeptide is Cytochrome P450 2C19 (CYP2C19) (Homo sapiens (Human)).